We begin with the raw amino-acid sequence, 95 residues long: Putative protein RDUR (95 aa).

Residues 1-12 (MNNSFNKEDRMS) show a composition bias toward basic and acidic residues. Residues 1 to 20 (MNNSFNKEDRMSSDTMVGSC) form a disordered region.

Its function is as follows. Could play a role in innate immunity against viruses. The polypeptide is Putative protein RDUR (Homo sapiens (Human)).